We begin with the raw amino-acid sequence, 428 residues long: L-fucose-proton symporter (428 aa).

12 consecutive transmembrane segments (helical) span residues 10–30, 51–71, 78–98, 100–120, 147–167, 204–224, 250–270, 288–308, 311–331, 339–359, 371–391, and 401–421; these read FIVP…ANDI, LVQL…ALFA, AGIL…WPAA, YEIF…LAFL, FNPL…LTNL, IALG…KMPA, EGVI…TFIV, IIAM…MKYL, EFML…VIFI, CLIL…GIAL, AGLV…GMII, and AVNF…IYGF.

It belongs to the major facilitator superfamily. FHS transporter (TC 2.A.1.7) family.

The protein resides in the cell inner membrane. It carries out the reaction L-fucose(in) + H(+)(in) = L-fucose(out) + H(+)(out). Mediates the uptake of L-fucose across the boundary membrane with the concomitant transport of protons into the cell (symport system). This is L-fucose-proton symporter (fucP) from Haemophilus influenzae (strain ATCC 51907 / DSM 11121 / KW20 / Rd).